The primary structure comprises 128 residues: Phosphoribosyl-AMP cyclohydrolase (128 aa).

Asp77 serves as a coordination point for Mg(2+). A Zn(2+)-binding site is contributed by Cys78. Positions 79 and 81 each coordinate Mg(2+). The Zn(2+) site is built by Cys94 and Cys101.

The protein belongs to the PRA-CH family. In terms of assembly, homodimer. Mg(2+) is required as a cofactor. Zn(2+) serves as cofactor.

Its subcellular location is the cytoplasm. It carries out the reaction 1-(5-phospho-beta-D-ribosyl)-5'-AMP + H2O = 1-(5-phospho-beta-D-ribosyl)-5-[(5-phospho-beta-D-ribosylamino)methylideneamino]imidazole-4-carboxamide. It functions in the pathway amino-acid biosynthesis; L-histidine biosynthesis; L-histidine from 5-phospho-alpha-D-ribose 1-diphosphate: step 3/9. Its function is as follows. Catalyzes the hydrolysis of the adenine ring of phosphoribosyl-AMP. In Granulibacter bethesdensis (strain ATCC BAA-1260 / CGDNIH1), this protein is Phosphoribosyl-AMP cyclohydrolase.